The primary structure comprises 692 residues: SH3 domain-containing protein 21 (692 aa).

The disordered stretch occupies residues 1-60; the sequence is MVQSELQLQPRAGGRAEAASWGDRGNDKGGFGNPDMPSVSPGPQRPPKLSSLAYDSPPDY. One can recognise an SH3 domain in the interval 65–126; the sequence is SHPEAYRVLF…PDNFVLPPPP (62 aa). 3 disordered regions span residues 132-501, 536-605, and 672-692; these read PRKV…EVLP, PKGG…SQET, and VMQG…TQTY. Residues 177–186 are compositionally biased toward basic and acidic residues; that stretch reads PSRDSQKLTS. The segment covering 210–220 has biased composition (polar residues); it reads TQTPQQRSVSS. Basic and acidic residues-rich tracts occupy residues 378 to 396, 490 to 501, and 542 to 582; these read VSTR…EALQ, NEERLLRGEVLP, and SKEE…KEEV. The stretch at 628-678 forms a coiled coil; the sequence is SLRGEVESLRRALELMGVQLERKLTDIWEELKSEKEQRQRLEVQVMQGTQK. Residues 673-692 show a composition bias toward polar residues; that stretch reads MQGTQKSQTPRIIHAQTQTY.

The chain is SH3 domain-containing protein 21 (SH3D21) from Macaca fascicularis (Crab-eating macaque).